The chain runs to 472 residues: Glutamate--tRNA ligase 2 (472 aa).

Residues 12–22 (PSPSGLLHLGN) carry the 'HIGH' region motif. A 'KMSKS' region motif is present at residues 253–257 (PLSKR). Lysine 256 lines the ATP pocket.

The protein belongs to the class-I aminoacyl-tRNA synthetase family. Glutamate--tRNA ligase type 1 subfamily. Monomer.

The protein localises to the cytoplasm. The catalysed reaction is tRNA(Glu) + L-glutamate + ATP = L-glutamyl-tRNA(Glu) + AMP + diphosphate. In terms of biological role, catalyzes the attachment of glutamate to tRNA(Glu) in a two-step reaction: glutamate is first activated by ATP to form Glu-AMP and then transferred to the acceptor end of tRNA(Glu). The sequence is that of Glutamate--tRNA ligase 2 from Nitrosococcus oceani (strain ATCC 19707 / BCRC 17464 / JCM 30415 / NCIMB 11848 / C-107).